Consider the following 173-residue polypeptide: Bifunctional protein PyrR (173 aa).

Residues 93 to 105 (IILVDDVLYTGRT) carry the PRPP-binding motif.

It belongs to the purine/pyrimidine phosphoribosyltransferase family. PyrR subfamily. As to quaternary structure, homodimer and homohexamer; in equilibrium.

It carries out the reaction UMP + diphosphate = 5-phospho-alpha-D-ribose 1-diphosphate + uracil. Regulates transcriptional attenuation of the pyrimidine nucleotide (pyr) operon by binding in a uridine-dependent manner to specific sites on pyr mRNA. This disrupts an antiterminator hairpin in the RNA and favors formation of a downstream transcription terminator, leading to a reduced expression of downstream genes. In terms of biological role, also displays a weak uracil phosphoribosyltransferase activity which is not physiologically significant. The protein is Bifunctional protein PyrR of Streptococcus equi subsp. zooepidemicus (strain MGCS10565).